The sequence spans 327 residues: Ribosomal RNA large subunit methyltransferase F (327 aa).

The disordered stretch occupies residues 1–24; that stretch reads MPRKTSSQPRPAEPKAVLHPRNRH.

It belongs to the methyltransferase superfamily. METTL16/RlmF family.

The protein resides in the cytoplasm. The catalysed reaction is adenosine(1618) in 23S rRNA + S-adenosyl-L-methionine = N(6)-methyladenosine(1618) in 23S rRNA + S-adenosyl-L-homocysteine + H(+). Its function is as follows. Specifically methylates the adenine in position 1618 of 23S rRNA. The protein is Ribosomal RNA large subunit methyltransferase F of Stutzerimonas stutzeri (strain A1501) (Pseudomonas stutzeri).